The sequence spans 451 residues: Opioid growth factor receptor-like protein 1 (451 aa).

Disordered stretches follow at residues 1-89 (MGNL…TAKP) and 308-451 (ENFI…VLVQ). Residues 43–66 (PGQESEQPAQPPEQAGGRPGASPA) show a composition bias toward low complexity. Residues 322 to 341 (GSKAQKMSSPLASSHNSQTS) are compositionally biased toward polar residues. 2 stretches are compositionally biased toward basic and acidic residues: residues 362–381 (TAED…DRPS) and 389–399 (AKPRNTEKDSN). A compositionally biased stretch (low complexity) spans 431–443 (NDNQDNENPGNTN).

This sequence belongs to the opioid growth factor receptor family. As to expression, ubiquitous.

The polypeptide is Opioid growth factor receptor-like protein 1 (OGFRL1) (Homo sapiens (Human)).